The chain runs to 502 residues: CBL-interacting protein kinase 11 (502 aa).

In terms of domain architecture, Protein kinase spans 12–267 (YEVGKQLGQG…IPRIKRSTWY (256 aa)). ATP is bound by residues 18–26 (LGQGTFAKV) and lysine 41. Catalysis depends on aspartate 135, which acts as the Proton acceptor. The tract at residues 153-182 (DFGLSALAESKRQDGLLHTTCGTPAYVAPE) is activation loop. The 37-residue stretch at 297–333 (AECSTSEENQGSLSLPNLNAFDIISLSTGFNLSGFFE) folds into the NAF domain. The tract at residues 339-367 (QEERFTTRQPVTTVLGKLKELAKRLKLKV) is PPI. A disordered region spans residues 447–502 (LQGEQQQSPLPPELPQDQLQPSLPQQEKQDMPEPPLLPQVPQEEVQTSIPAEQTKN). The segment covering 461 to 472 (PQDQLQPSLPQQ) has biased composition (low complexity). Residues 493–502 (TSIPAEQTKN) are compositionally biased toward polar residues.

This sequence belongs to the protein kinase superfamily. CAMK Ser/Thr protein kinase family. SNF1 subfamily. The cofactor is Mn(2+).

The catalysed reaction is L-seryl-[protein] + ATP = O-phospho-L-seryl-[protein] + ADP + H(+). The enzyme catalyses L-threonyl-[protein] + ATP = O-phospho-L-threonyl-[protein] + ADP + H(+). Its function is as follows. CIPK serine-threonine protein kinases interact with CBL proteins. Binding of a CBL protein to the regulatory NAF domain of CIPK protein lead to the activation of the kinase in a calcium-dependent manner. The chain is CBL-interacting protein kinase 11 (CIPK11) from Oryza sativa subsp. japonica (Rice).